Here is a 1802-residue protein sequence, read N- to C-terminus: Non-reducing polyketide synthase nscA (1802 aa).

The interval 27–261 (DLFRRLDQHS…PLPVYDGLCH (235 aa)) is N-terminal acylcarrier protein transacylase domain (SAT). The region spanning 396 to 829 (SSKLAIVGMA…GGNTTLLLED (434 aa)) is the Ketosynthase family 3 (KS3) domain. Catalysis depends on for beta-ketoacyl synthase activity residues Cys569, His704, and His747. Positions 935–1235 (FTGQGAYYHG…SASAIPSCRR (301 aa)) are malonyl-CoA:ACP transacylase (MAT) domain. Residues 1322–1641 (TSLVHQITAE…RLLMDRFFSP (320 aa)) form a product template (PT) domain region. The N-terminal hotdog fold stretch occupies residues 1326–1462 (HQITAETVEA…ATIRFEDPEA (137 aa)). The 311-residue stretch at 1326–1636 (HQITAETVEA…FRRVPRLLMD (311 aa)) folds into the PKS/mFAS DH domain. Catalysis depends on His1358, which acts as the Proton acceptor; for dehydratase activity. The tract at residues 1490 to 1636 (ASRLSKPLAY…FRRVPRLLMD (147 aa)) is C-terminal hotdog fold. Residue Asp1547 is the Proton donor; for dehydratase activity of the active site. Positions 1699-1729 (LLATSSKSSTPKESPIVTPAESERAEPVDNS) are disordered. A compositionally biased stretch (low complexity) spans 1702–1713 (TSSKSSTPKESP). The Carrier domain occupies 1725-1802 (PVDNSMTSQC…EMTAWIEEYC (78 aa)). Ser1762 bears the O-(pantetheine 4'-phosphoryl)serine mark.

Requires pantetheine 4'-phosphate as cofactor.

It participates in secondary metabolite biosynthesis. Functionally, non-reducing polyketide synthase; part of the gene cluster that mediates the biosynthesis of neosartoricin B, a prenylated anthracenone that probably exhibits T-cell antiproliferative activity, suggestive of a physiological role as an immunosuppressive agent. The non-reducing polyketide synthase nscA probably synthesizes and cyclizes the decaketide backbone. The hydrolase nscB then mediates the product release through hydrolysis followed by spontaneous decarboxylation. The prenyltransferase nscD catalyzes the addition of the dimethylallyl group to the aromatic C5. The FAD-dependent monooxygenase nscC is then responsible for the stereospecific hydroxylation at C2. Neosartoricin B can be converted into two additional compounds neosartoricins C and D. Neosartoricin C is a spirocyclic compound that is cyclized through the attack of C3 hydroxyl on C14, followed by dehydration. On the other hand, neosartoricin D is a further cyclized compound in which attack of C2 on C14 in neosartoricin C results in the formation of the acetal-containing dioxabicyclo-octanone ring. Both of these compounds are novel and possibly represent related metabolites of the gene cluster. The polypeptide is Non-reducing polyketide synthase nscA (Trichophyton tonsurans (strain CBS 112818) (Scalp ringworm fungus)).